The following is a 496-amino-acid chain: Lysine--tRNA ligase (496 aa).

Positions 409 and 416 each coordinate Mg(2+).

The protein belongs to the class-II aminoacyl-tRNA synthetase family. In terms of assembly, homodimer. Requires Mg(2+) as cofactor.

It is found in the cytoplasm. The enzyme catalyses tRNA(Lys) + L-lysine + ATP = L-lysyl-tRNA(Lys) + AMP + diphosphate. In Streptococcus suis (strain 05ZYH33), this protein is Lysine--tRNA ligase.